A 342-amino-acid chain; its full sequence is Muscleblind-like protein 3 (342 aa).

4 consecutive C3H1-type zinc fingers follow at residues 14-42 (WLTL…HPPR), 48-74 (NGRV…HPPP), 174-202 (TDRL…HPTD), and 210-236 (DNSV…HPPP). Low complexity predominate over residues 316 to 326 (PSTVSTATPPA). The segment at 316–342 (PSTVSTATPPASNVPYVPTTTGNQLKY) is disordered. Residues 333–342 (PTTTGNQLKY) are compositionally biased toward polar residues.

This sequence belongs to the muscleblind family.

It localises to the nucleus. The protein resides in the cytoplasm. Functionally, mediates pre-mRNA alternative splicing regulation. Acts either as activator or repressor of splicing on specific pre-mRNA targets. Inhibits cardiac troponin-T (TNNT2) pre-mRNA exon inclusion but induces insulin receptor (IR) pre-mRNA exon inclusion in muscle. Antagonizes the alternative splicing activity pattern of CELF proteins. Could inhibit terminal muscle differentiation, acting at approximately the time of myogenin induction. The chain is Muscleblind-like protein 3 (Mbnl3) from Mus musculus (Mouse).